The sequence spans 354 residues: Neutral protease 2 homolog SNOG_02177 (354 aa).

Residues 1–19 form the signal peptide; the sequence is MKFQILSVAALASLASAVS. The propeptide occupies 20-182; it reads DALDKRDSPL…WIDLAKRTIV (163 aa). 2 cysteine pairs are disulfide-bonded: cysteine 186/cysteine 257 and cysteine 264/cysteine 282. A glycan (N-linked (GlcNAc...) asparagine) is linked at asparagine 214. Histidine 306 serves as a coordination point for Zn(2+). Glutamate 307 is an active-site residue. Histidine 310 contributes to the Zn(2+) binding site.

It belongs to the peptidase M35 family. It depends on Zn(2+) as a cofactor.

It localises to the secreted. It carries out the reaction Preferential cleavage of bonds with hydrophobic residues in P1'. Also 3-Asn-|-Gln-4 and 8-Gly-|-Ser-9 bonds in insulin B chain.. Secreted metalloproteinase that allows assimilation of proteinaceous substrates. Shows high activities on basic nuclear substrates such as histone and protamine. This chain is Neutral protease 2 homolog SNOG_02177, found in Phaeosphaeria nodorum (strain SN15 / ATCC MYA-4574 / FGSC 10173) (Glume blotch fungus).